The primary structure comprises 351 residues: Porphobilinogen deaminase (351 aa).

At Cys-242 the chain carries S-(dipyrrolylmethanemethyl)cysteine.

Belongs to the HMBS family. In terms of assembly, monomer. It depends on dipyrromethane as a cofactor.

The enzyme catalyses 4 porphobilinogen + H2O = hydroxymethylbilane + 4 NH4(+). Its pathway is porphyrin-containing compound metabolism; protoporphyrin-IX biosynthesis; coproporphyrinogen-III from 5-aminolevulinate: step 2/4. Tetrapolymerization of the monopyrrole PBG into the hydroxymethylbilane pre-uroporphyrinogen in several discrete steps. The protein is Porphobilinogen deaminase of Rickettsia africae (strain ESF-5).